Here is a 317-residue protein sequence, read N- to C-terminus: Probable deoxyhypusine synthase 1 (317 aa).

Lys285 functions as the Nucleophile in the catalytic mechanism.

It belongs to the deoxyhypusine synthase family. Requires NAD(+) as cofactor.

The catalysed reaction is [eIF5A protein]-L-lysine + spermidine = [eIF5A protein]-deoxyhypusine + propane-1,3-diamine. It participates in protein modification; eIF5A hypusination. Functionally, catalyzes the NAD-dependent oxidative cleavage of spermidine and the subsequent transfer of the butylamine moiety of spermidine to the epsilon-amino group of a specific lysine residue of the eIF-5A precursor protein to form the intermediate deoxyhypusine residue. This Methanosarcina acetivorans (strain ATCC 35395 / DSM 2834 / JCM 12185 / C2A) protein is Probable deoxyhypusine synthase 1 (dys1).